A 287-amino-acid chain; its full sequence is tRNA selenocysteine 1-associated protein 1 (287 aa).

2 consecutive RRM domains span residues 3 to 86 (ASLW…YATY) and 96 to 175 (YSLF…VAIP).

It belongs to the RRM TRSPAP family. As to quaternary structure, component of the tRNA(Sec) complex composed at least of EEFSEC, SECISBP2, SEPHS1, SEPSECS, TRNAU1AP and tRNA(Sec). Found in a complex with tRNA(Sec). Interacts with SEPSECS. Associates with mRNP and/or polysomes. Found in a complex with EEFSEC, SECISBP2, TRNAU1AP and tRNA(Sec).

Its subcellular location is the nucleus. The protein resides in the cytoplasm. In terms of biological role, involved in the early steps of selenocysteine biosynthesis and tRNA(Sec) charging to the later steps resulting in the cotranslational incorporation of selenocysteine into selenoproteins. Stabilizes the SECISBP2, EEFSEC and tRNA(Sec) complex. May be involved in the methylation of tRNA(Sec). Enhances efficiency of selenoproteins synthesis. The protein is tRNA selenocysteine 1-associated protein 1 (TRNAU1AP) of Bos taurus (Bovine).